The primary structure comprises 218 residues: Cytochrome b6 (218 aa).

Residues 35 to 55 (IFYCLGGITLVCFLIQFATGF) form a helical membrane-spanning segment. Cys38 lines the heme c pocket. Heme b contacts are provided by His89 and His103. 3 helical membrane-spanning segments follow: residues 93–113 (ASMMVLMLILHVFRVYLTGGF), 119–139 (LTWVTGVTMAVITVSFGVTGY), and 189–209 (LHTFVLPWLLAVFMLAHFLMI). His190 and His205 together coordinate heme b.

The protein belongs to the cytochrome b family. PetB subfamily. The 4 large subunits of the cytochrome b6-f complex are cytochrome b6, subunit IV (17 kDa polypeptide, PetD), cytochrome f and the Rieske protein, while the 4 small subunits are PetG, PetL, PetM and PetN. The complex functions as a dimer. It depends on heme b as a cofactor. The cofactor is heme c.

It localises to the cellular thylakoid membrane. Functionally, component of the cytochrome b6-f complex, which mediates electron transfer between photosystem II (PSII) and photosystem I (PSI), cyclic electron flow around PSI, and state transitions. This chain is Cytochrome b6, found in Synechococcus sp. (strain RCC307).